Here is a 179-residue protein sequence, read N- to C-terminus: Stathmin-2 (179 aa).

A membrane attachment region spans residues methionine 1–tyrosine 26. Residue serine 16 is modified to Phosphoserine. 2 S-palmitoyl cysteine lipidation sites follow: cysteine 22 and cysteine 24. Residues aspartate 38–glycine 179 form the SLD domain. The tract at residues aspartate 39–lysine 96 is regulatory/phosphorylation domain. Serine 50, serine 62, serine 73, and serine 97 each carry phosphoserine. Positions lysine 75–glycine 179 form a coiled coil.

This sequence belongs to the stathmin family. As to quaternary structure, interacts with MAPK8. Interacts with ITM2C. Interacts with KIFBP. Interacts (via the N-terminal region) with CIB1 (via C-terminal region); the interaction is direct, occurs in a calcium-dependent manner and attenuates the neurite outgrowth inhibition of STMN2. Post-translationally, sumoylated. Phosphorylated mostly by MAPK8, but also by MAPK9 and MAPK10 in the developing brain cortex. In terms of processing, N-terminal palmitoylation promotes specific anchoring to the cytosolic leaflet of Golgi membranes and subsequent vesicular trafficking along dendrites and axons. Neuronal Stathmins are substrates for palmitoyltransferases ZDHHC3, ZDHHC7 and ZDHHC15. In terms of tissue distribution, neuron specific.

The protein resides in the cytoplasm. It localises to the perinuclear region. Its subcellular location is the cell projection. It is found in the growth cone. The protein localises to the membrane. The protein resides in the axon. It localises to the golgi apparatus. Its subcellular location is the endosome. It is found in the lamellipodium. Functionally, regulator of microtubule stability. When phosphorylated by MAPK8, stabilizes microtubules and consequently controls neurite length in cortical neurons. In the developing brain, negatively regulates the rate of exit from multipolar stage and retards radial migration from the ventricular zone. The chain is Stathmin-2 (STMN2) from Homo sapiens (Human).